Reading from the N-terminus, the 392-residue chain is Phosphoglycerate kinase (392 aa).

Residues 21-23, R36, 59-62, R114, and R147 contribute to the substrate site; these read DMN and HLGR. ATP is bound by residues K198, E320, and 346–349; that span reads GGDT.

The protein belongs to the phosphoglycerate kinase family. In terms of assembly, monomer.

The protein localises to the cytoplasm. The enzyme catalyses (2R)-3-phosphoglycerate + ATP = (2R)-3-phospho-glyceroyl phosphate + ADP. It participates in carbohydrate degradation; glycolysis; pyruvate from D-glyceraldehyde 3-phosphate: step 2/5. This chain is Phosphoglycerate kinase, found in Neisseria meningitidis serogroup A / serotype 4A (strain DSM 15465 / Z2491).